Here is a 77-residue protein sequence, read N- to C-terminus: Large ribosomal subunit protein bL28 (77 aa).

Residues methionine 1 to threonine 25 form a disordered region.

This sequence belongs to the bacterial ribosomal protein bL28 family.

In Paraburkholderia phytofirmans (strain DSM 17436 / LMG 22146 / PsJN) (Burkholderia phytofirmans), this protein is Large ribosomal subunit protein bL28.